The sequence spans 379 residues: Putative zinc metalloprotease BMEI0829 (379 aa).

Residue histidine 33 participates in Zn(2+) binding. Glutamate 34 is an active-site residue. Histidine 37 is a Zn(2+) binding site. The next 4 helical transmembrane spans lie at 39-61 (LVAR…ELLG), 122-144 (VFAG…FALY), 305-327 (FDWL…LFPL), and 355-377 (IFYR…NDLF). One can recognise a PDZ domain in the interval 133-208 (TIAIFSVFFA…LNFTVERDGK (76 aa)).

This sequence belongs to the peptidase M50B family. The cofactor is Zn(2+).

It localises to the cell inner membrane. In Brucella melitensis biotype 1 (strain ATCC 23456 / CCUG 17765 / NCTC 10094 / 16M), this protein is Putative zinc metalloprotease BMEI0829.